We begin with the raw amino-acid sequence, 229 residues long: 3-isopropylmalate dehydratase small subunit (229 aa).

Residues 208–229 (KIESAREPDDDWTGPLADRGII) are disordered.

Belongs to the LeuD family. LeuD type 1 subfamily. As to quaternary structure, heterodimer of LeuC and LeuD.

It catalyses the reaction (2R,3S)-3-isopropylmalate = (2S)-2-isopropylmalate. Its pathway is amino-acid biosynthesis; L-leucine biosynthesis; L-leucine from 3-methyl-2-oxobutanoate: step 2/4. In terms of biological role, catalyzes the isomerization between 2-isopropylmalate and 3-isopropylmalate, via the formation of 2-isopropylmaleate. The chain is 3-isopropylmalate dehydratase small subunit from Bifidobacterium longum subsp. infantis (strain ATCC 15697 / DSM 20088 / JCM 1222 / NCTC 11817 / S12).